The sequence spans 347 residues: Putative ORC1-type DNA replication protein 1 (347 aa).

Residues 34-38 (TGKTV), Tyr167, and Arg179 each bind ATP.

The protein belongs to the CDC6/cdc18 family.

Involved in regulation of DNA replication. Has no effect on MCM helicase activity, either stimulatory or inhibitory. Does not bind DNA. The chain is Putative ORC1-type DNA replication protein 1 (cdc6-1) from Thermoplasma acidophilum (strain ATCC 25905 / DSM 1728 / JCM 9062 / NBRC 15155 / AMRC-C165).